Reading from the N-terminus, the 211-residue chain is Probable nicotinate-nucleotide adenylyltransferase (211 aa).

It belongs to the NadD family.

It carries out the reaction nicotinate beta-D-ribonucleotide + ATP + H(+) = deamido-NAD(+) + diphosphate. Its pathway is cofactor biosynthesis; NAD(+) biosynthesis; deamido-NAD(+) from nicotinate D-ribonucleotide: step 1/1. Functionally, catalyzes the reversible adenylation of nicotinate mononucleotide (NaMN) to nicotinic acid adenine dinucleotide (NaAD). In Legionella pneumophila (strain Lens), this protein is Probable nicotinate-nucleotide adenylyltransferase.